The primary structure comprises 227 residues: Cytochrome c oxidase subunit 2 (227 aa).

Topologically, residues 1–14 are mitochondrial intermembrane; it reads MAYPFQLGLQDATS. The helical transmembrane segment at 15–45 threads the bilayer; it reads PIMEELMNFHDHTLMIVFLISSLVLYIISLM. The Mitochondrial matrix segment spans residues 46–59; it reads LTTKLTHTSTMDAQ. The chain crosses the membrane as a helical span at residues 60–87; that stretch reads EVETIWTILPAAILILIALPSLRILYMM. Topologically, residues 88 to 227 are mitochondrial intermembrane; that stretch reads DEINNPALTV…YFENWSASMI (140 aa). Histidine 161, cysteine 196, glutamate 198, cysteine 200, histidine 204, and methionine 207 together coordinate Cu cation. Residue glutamate 198 coordinates Mg(2+). Tyrosine 218 carries the post-translational modification Phosphotyrosine.

This sequence belongs to the cytochrome c oxidase subunit 2 family. In terms of assembly, component of the cytochrome c oxidase (complex IV, CIV), a multisubunit enzyme composed of 14 subunits. The complex is composed of a catalytic core of 3 subunits MT-CO1, MT-CO2 and MT-CO3, encoded in the mitochondrial DNA, and 11 supernumerary subunits COX4I, COX5A, COX5B, COX6A, COX6B, COX6C, COX7A, COX7B, COX7C, COX8 and NDUFA4, which are encoded in the nuclear genome. The complex exists as a monomer or a dimer and forms supercomplexes (SCs) in the inner mitochondrial membrane with NADH-ubiquinone oxidoreductase (complex I, CI) and ubiquinol-cytochrome c oxidoreductase (cytochrome b-c1 complex, complex III, CIII), resulting in different assemblies (supercomplex SCI(1)III(2)IV(1) and megacomplex MCI(2)III(2)IV(2)). Found in a complex with TMEM177, COA6, COX18, COX20, SCO1 and SCO2. Interacts with TMEM177 in a COX20-dependent manner. Interacts with COX20. Interacts with COX16. Cu cation serves as cofactor.

Its subcellular location is the mitochondrion inner membrane. The enzyme catalyses 4 Fe(II)-[cytochrome c] + O2 + 8 H(+)(in) = 4 Fe(III)-[cytochrome c] + 2 H2O + 4 H(+)(out). In terms of biological role, component of the cytochrome c oxidase, the last enzyme in the mitochondrial electron transport chain which drives oxidative phosphorylation. The respiratory chain contains 3 multisubunit complexes succinate dehydrogenase (complex II, CII), ubiquinol-cytochrome c oxidoreductase (cytochrome b-c1 complex, complex III, CIII) and cytochrome c oxidase (complex IV, CIV), that cooperate to transfer electrons derived from NADH and succinate to molecular oxygen, creating an electrochemical gradient over the inner membrane that drives transmembrane transport and the ATP synthase. Cytochrome c oxidase is the component of the respiratory chain that catalyzes the reduction of oxygen to water. Electrons originating from reduced cytochrome c in the intermembrane space (IMS) are transferred via the dinuclear copper A center (CU(A)) of subunit 2 and heme A of subunit 1 to the active site in subunit 1, a binuclear center (BNC) formed by heme A3 and copper B (CU(B)). The BNC reduces molecular oxygen to 2 water molecules using 4 electrons from cytochrome c in the IMS and 4 protons from the mitochondrial matrix. This is Cytochrome c oxidase subunit 2 (MT-CO2) from Lemniscomys barbarus (Barbary striped grass mouse).